A 168-amino-acid chain; its full sequence is Auxin-responsive protein IAA1 (168 aa).

The interval 1 to 74 (MEVTNGLNLK…NRKNNNNKNV (74 aa)) is disordered. An EAR-like (transcriptional repression) motif is present at residues 14–18 (LRLGL). The span at 23–34 (EEQQLELSCVRS) shows a compositional bias: polar residues. The 88-residue stretch at 74–161 (VSYVKVSMDG…SCQKLRIMKG (88 aa)) folds into the PB1 domain.

This sequence belongs to the Aux/IAA family. Homodimers and heterodimers. Interacts with the auxin-responsive protein IAA2. Interacts with TPL. Post-translationally, phosphorylated by phytochrome A in vitro. As to expression, preferentially expressed in stems, leaves and flowers.

The protein localises to the nucleus. Its function is as follows. Aux/IAA proteins are short-lived transcriptional factors that function as repressors of early auxin response genes at low auxin concentrations. Repression is thought to result from the interaction with auxin response factors (ARFs), proteins that bind to the auxin-responsive promoter element (AuxRE). Formation of heterodimers with ARF proteins may alter their ability to modulate early auxin response genes expression. This is Auxin-responsive protein IAA1 (IAA1) from Arabidopsis thaliana (Mouse-ear cress).